A 160-amino-acid polypeptide reads, in one-letter code: Transcriptional regulator MraZ (160 aa).

2 consecutive SpoVT-AbrB domains span residues 5–50 (KFET…EGVY) and 93–136 (AIEC…SQAE).

This sequence belongs to the MraZ family. Forms oligomers.

It localises to the cytoplasm. The protein localises to the nucleoid. The sequence is that of Transcriptional regulator MraZ from Geotalea uraniireducens (strain Rf4) (Geobacter uraniireducens).